Here is a 236-residue protein sequence, read N- to C-terminus: Leucyl/phenylalanyl-tRNA--protein transferase (236 aa).

Belongs to the L/F-transferase family.

It localises to the cytoplasm. The catalysed reaction is N-terminal L-lysyl-[protein] + L-leucyl-tRNA(Leu) = N-terminal L-leucyl-L-lysyl-[protein] + tRNA(Leu) + H(+). It catalyses the reaction N-terminal L-arginyl-[protein] + L-leucyl-tRNA(Leu) = N-terminal L-leucyl-L-arginyl-[protein] + tRNA(Leu) + H(+). The enzyme catalyses L-phenylalanyl-tRNA(Phe) + an N-terminal L-alpha-aminoacyl-[protein] = an N-terminal L-phenylalanyl-L-alpha-aminoacyl-[protein] + tRNA(Phe). In terms of biological role, functions in the N-end rule pathway of protein degradation where it conjugates Leu, Phe and, less efficiently, Met from aminoacyl-tRNAs to the N-termini of proteins containing an N-terminal arginine or lysine. This Shewanella woodyi (strain ATCC 51908 / MS32) protein is Leucyl/phenylalanyl-tRNA--protein transferase.